We begin with the raw amino-acid sequence, 837 residues long: MANILKTIIENDKGEIRRLEKMADKVFKYEDQMAALTDDQLKAKTVEFKERYQNGESLDSLLYEAFAVVREGAKRVLGLFPYKVQVMGGIVLHHGDVPEMRTGEGKTLTATMPVYLNALSGKGVHVVTVNEYLSERDATEMGELYSWLGLSVGINLATKSPMEKKEAYECDITYSTNSEIGFDYLRDNMVVRAENMVQRPLNYALVDEVDSILIDEARTPLIVSGANAVETSQLYHMADHYVKSLNKDDYIIDVQSKTIGLSDSGIDRAESYFKLENLYDIENVALTHFIDNALRANYIMLLDIDYVVSEEQEILIVDQFTGRTMEGRRYSDGLHQAIEAKEGVPIQDETKTSASITYQNLFRMYKKLSGMTGTGKTEEEEFREIYNIRVIPIPTNRPVQRIDHSDLLYASIESKFKAVVEDVKARYQKGQPVLVGTVAVETSDYISKKLVAAGVPHEVLNAKNHYREAQIIMNAGQRGAVTIATNMAGRGTDIKLGEGVRELGGLCVIGTERHESRRIDNQLRGRSGRQGDPGESQFYLSLEDDLMKRFGSERLKGIFERLNMSEEAIESRMLTRQVEAAQKRVEGNNYDTRKQVLQYDDVMREQREIIYTQRYDVITADRDLAPEIQAMIKRTIGRVVDGHARAKQDEKLEAILNFAKYNLLPEDSITMEDLSGLSDKAIKEELFQRALKVYDSQVSKLRDEEAVKEFQKVLILRVVDNKWTDHIDALDQLRNAVGLRGYAQNNPVVEYQAEGFRMFNDMIGSIEFDVTRLMMKAQIHEQERPQAERHISTTATRNIAAHQASMPEDLDLSQIGRNELCPCGSGKKFKNCHGKRQ.

Residues Gln-85, 103-107, and Asp-493 contribute to the ATP site; that span reads GEGKT. Cys-821, Cys-823, Cys-832, and His-833 together coordinate Zn(2+).

Belongs to the SecA family. Monomer and homodimer. Part of the essential Sec protein translocation apparatus which comprises SecA, SecYEG and auxiliary proteins SecDF. Other proteins may also be involved. Requires Zn(2+) as cofactor.

It localises to the cell membrane. The protein localises to the cytoplasm. The enzyme catalyses ATP + H2O + cellular proteinSide 1 = ADP + phosphate + cellular proteinSide 2.. Functionally, part of the Sec protein translocase complex. Interacts with the SecYEG preprotein conducting channel. Has a central role in coupling the hydrolysis of ATP to the transfer of proteins into and across the cell membrane, serving as an ATP-driven molecular motor driving the stepwise translocation of polypeptide chains across the membrane. This Streptococcus pneumoniae serotype 19F (strain G54) protein is Protein translocase subunit SecA.